The following is a 156-amino-acid chain: dCTP deaminase (156 aa).

DCTP contacts are provided by residues 79–84 (RSSLAR), Asp-95, Gln-124, and Tyr-138.

Belongs to the dCTP deaminase family. In terms of assembly, homotrimer.

The enzyme catalyses dCTP + H2O + H(+) = dUTP + NH4(+). It participates in pyrimidine metabolism; dUMP biosynthesis; dUMP from dCTP (dUTP route): step 1/2. In terms of biological role, catalyzes the deamination of dCTP to dUTP. In Pyrococcus horikoshii (strain ATCC 700860 / DSM 12428 / JCM 9974 / NBRC 100139 / OT-3), this protein is dCTP deaminase.